We begin with the raw amino-acid sequence, 740 residues long: Platelet endothelial cell adhesion molecule (740 aa).

An N-terminal signal peptide occupies residues 1-27 (MRLRWTQGGNMWLGVLLTLQLCSSLEG). The Extracellular portion of the chain corresponds to 28 to 602 (QENSFTINSI…VRVYLAPWKK (575 aa)). 3 consecutive Ig-like C2-type domains span residues 35–126 (NSIH…YKVV), 145–223 (GGVV…DSVR), and 236–315 (PKFH…SKVS). N-linked (GlcNAc...) asparagine glycans are attached at residues asparagine 52 and asparagine 84. 3 disulfide bridges follow: cysteine 57/cysteine 109, cysteine 152/cysteine 206, and cysteine 256/cysteine 304. 8 N-linked (GlcNAc...) asparagine glycosylation sites follow: asparagine 284, asparagine 301, asparagine 320, asparagine 357, asparagine 372, asparagine 436, asparagine 456, and asparagine 552. Ig-like C2-type domains follow at residues 328–404 (PKLK…VQIA), 425–494 (GQTI…KVLR), and 500–592 (PVEE…NILA). 3 disulfide bridges follow: cysteine 347/cysteine 387, cysteine 432/cysteine 477, and cysteine 524/cysteine 573. Residues 603–621 (GLIAVVVIAVIIAVLLLGA) form a helical membrane-spanning segment. Topologically, residues 622–740 (RFYFLKKSKA…SRTEGSLDGT (119 aa)) are cytoplasmic. 2 short sequence motifs (ITIM motif) span residues 690–695 (VEYTEV) and 713–718 (TVYSEI). Phosphotyrosine; by FER is present on residues tyrosine 692 and tyrosine 715. Residues 697-740 (VTSPEPHRGLGTKGTETVYSEIRKADPDLVENRYSRTEGSLDGT) are disordered. The segment at 711-731 (TETVYSEIRKADPDLVENRYS) is membrane-bound segment which detaches upon phosphorylation. The span at 717-732 (EIRKADPDLVENRYSR) shows a compositional bias: basic and acidic residues. The segment at 723–740 (PDLVENRYSRTEGSLDGT) is may play a role in cytoprotective signaling. Phosphoserine occurs at positions 731 and 736.

In terms of assembly, trans-homodimer (via Ig-like C2-type 1 and Ig-like C2-type 2 domains); trans-homodimerization is required for cell-cell interaction. Forms a complex with BDKRB2 and GNAQ. Interacts with BDKRB2 and GNAQ. Interacts with PTPN11; Tyr-715 is critical for PTPN11 recruitment. Interacts with FER. Interacts with CD177; the interaction is Ca(2+)-dependent; the interaction is direct. In terms of processing, phosphorylated on Ser and Tyr residues by src kinases after cellular activation. Upon activation, phosphorylated on Ser-731 which probably initiates the dissociation of the membrane-interaction segment (residues 711-731) from the cell membrane allowing the sequential phosphorylation of Tyr-715 and Tyr-692. Constitutively phosphorylated on Ser-736 in resting platelets. Phosphorylated on tyrosine residues by FER and FES in response to FCER1 activation. In endothelial cells Fyn mediates mechanical-force (stretch or pull) induced tyrosine phosphorylation. Palmitoylation by ZDHHC21 is necessary for cell surface expression in endothelial cells and enrichment in membrane rafts.

It is found in the cell membrane. Its subcellular location is the membrane raft. The protein localises to the cell junction. In terms of biological role, cell adhesion molecule which is required for leukocyte transendothelial migration (TEM) under most inflammatory conditions. Tyr-692 plays a critical role in TEM and is required for efficient trafficking of PECAM1 to and from the lateral border recycling compartment (LBRC) and is also essential for the LBRC membrane to be targeted around migrating leukocytes. Trans-homophilic interaction may play a role in endothelial cell-cell adhesion via cell junctions. Heterophilic interaction with CD177 plays a role in transendothelial migration of neutrophils. Homophilic ligation of PECAM1 prevents macrophage-mediated phagocytosis of neighboring viable leukocytes by transmitting a detachment signal. Promotes macrophage-mediated phagocytosis of apoptotic leukocytes by tethering them to the phagocytic cells; PECAM1-mediated detachment signal appears to be disabled in apoptotic leukocytes. Modulates bradykinin receptor BDKRB2 activation. Regulates bradykinin- and hyperosmotic shock-induced ERK1/2 activation in endothelial cells. Induces susceptibility to atherosclerosis. This Sus scrofa (Pig) protein is Platelet endothelial cell adhesion molecule (PECAM1).